Reading from the N-terminus, the 130-residue chain is Small ribosomal subunit protein uS8 (130 aa).

It belongs to the universal ribosomal protein uS8 family. Component of the 40S ribosomal subunit. Part of the small subunit (SSU) processome, composed of more than 70 proteins and the RNA chaperone small nucleolar RNA (snoRNA) U3.

The protein resides in the cytoplasm. It localises to the nucleus. The protein localises to the nucleolus. Component of the small ribosomal subunit. Part of the small subunit (SSU) processome, first precursor of the small eukaryotic ribosomal subunit. During the assembly of the SSU processome in the nucleolus, many ribosome biogenesis factors, an RNA chaperone and ribosomal proteins associate with the nascent pre-rRNA and work in concert to generate RNA folding, modifications, rearrangements and cleavage as well as targeted degradation of pre-ribosomal RNA by the RNA exosome. Required for erythropoiesis during embryonic development. The chain is Small ribosomal subunit protein uS8 from Danio rerio (Zebrafish).